The sequence spans 209 residues: UPF0174 protein jhp_1493 (209 aa).

The protein belongs to the UPF0174 family.

This chain is UPF0174 protein jhp_1493, found in Helicobacter pylori (strain J99 / ATCC 700824) (Campylobacter pylori J99).